The following is a 354-amino-acid chain: Cysteine proteinase 1 (354 aa).

Residues 1–24 (MARRNPLLFAIVVTILFVVCYGSA) form the signal peptide. A propeptide spans 25-125 (LIAQTPPPVD…HKEDVHVDDS (101 aa)) (activation peptide). 3 disulfides stabilise this stretch: Cys-150–Cys-191, Cys-184–Cys-229, and Cys-282–Cys-330. Cys-153 is a catalytic residue. N-linked (GlcNAc...) asparagine glycosylation is present at Asn-208. Residues His-289 and Asn-309 contribute to the active site.

Belongs to the peptidase C1 family.

Functionally, the cysteine proteinases have a potential role in host-parasite interaction and virulence. The sequence is that of Cysteine proteinase 1 (CYS1) from Leishmania pifanoi.